A 350-amino-acid polypeptide reads, in one-letter code: tRNA uridine(34) hydroxylase (350 aa).

Residues 146 to 240 enclose the Rhodanese domain; the sequence is DDPDAVFIDM…YARRAREQGL (95 aa). C200 acts as the Cysteine persulfide intermediate in catalysis. Over residues 319-328 the composition is skewed to basic and acidic residues; sequence RRRRAGRENG. Residues 319–350 form a disordered region; the sequence is RRRRAGRENGNKIFNKSRGRLNSKLSIPDPAE.

Belongs to the TrhO family.

It catalyses the reaction uridine(34) in tRNA + AH2 + O2 = 5-hydroxyuridine(34) in tRNA + A + H2O. In terms of biological role, catalyzes oxygen-dependent 5-hydroxyuridine (ho5U) modification at position 34 in tRNAs. In Salmonella choleraesuis (strain SC-B67), this protein is tRNA uridine(34) hydroxylase.